Reading from the N-terminus, the 353-residue chain is Protein U67 (353 aa).

This sequence belongs to the herpesviridae UL95 family.

The sequence is that of Protein U67 (U67) from Human herpesvirus 6A (strain Uganda-1102) (HHV-6 variant A).